A 144-amino-acid polypeptide reads, in one-letter code: Deoxyuridine 5'-triphosphate nucleotidohydrolase (144 aa).

DUMP contacts are provided by Ser-66, Gly-79, Asp-82, Tyr-85, Lys-90, Arg-134, Phe-139, and Gly-140.

The protein belongs to the dUTPase family. As to quaternary structure, homotrimer. It depends on Mg(2+) as a cofactor.

It carries out the reaction dUTP + H2O = dUMP + diphosphate + H(+). Its pathway is pyrimidine metabolism; dUMP biosynthesis; dUMP from dCTP (dUTP route): step 2/2. Involved in nucleotide metabolism via production of dUMP, the immediate precursor of thymidine nucleotides, and decreases the intracellular concentration of dUTP so that uracil cannot be incorporated into DNA. This Candida glabrata (strain ATCC 2001 / BCRC 20586 / JCM 3761 / NBRC 0622 / NRRL Y-65 / CBS 138) (Yeast) protein is Deoxyuridine 5'-triphosphate nucleotidohydrolase (DUT1).